Here is a 1457-residue protein sequence, read N- to C-terminus: ABC transporter G family member 36 (1457 aa).

The disordered stretch occupies residues 14-43 (RLGGSMRGDSGSMWRRGDDVFSRSSREEDD). The segment covering 28–39 (RRGDDVFSRSSR) has biased composition (basic and acidic residues). An ABC transporter 1 domain is found at 164–437 (GNALGILPNR…FESTGFKCPD (274 aa)). 197–204 (GPPGSGKT) contacts ATP. The ABC transmembrane type-2 1 domain maps to 515 to 728 (ELLKANIDRE…AQNAISVNEL (214 aa)). The next 7 membrane-spanning stretches (helical) occupy residues 533–553 (FVYM…MTLF), 565–585 (SGGI…FNGF), 621–641 (IPIT…VIGF), 653–673 (LLML…GGAA), 677–697 (IVAN…GGFI), 706–726 (WWIW…ISVN), and 765–785 (IGFG…TLAL). Residues 821-841 (SSGSTRRPMGNGTENDSTIVD) form a disordered region. Residues 860-1112 (LSFDNVRYSV…ELIKYFESIP (253 aa)) enclose the ABC transporter 2 domain. Position 905–912 (905–912 (GVSGAGKT)) interacts with ATP. One can recognise an ABC transmembrane type-2 2 domain in the interval 1185–1399 (TQCMACLWKQ…TLYGLVVSQF (215 aa)). Transmembrane regions (helical) follow at residues 1209-1229 (FFFT…LGGK), 1244-1264 (YAAV…VVAV), 1292-1312 (IPYT…MIGF), 1319-1339 (FFWY…YGMM), 1349-1369 (IASI…GFVI), 1380-1400 (WYCW…SQFG), and 1429-1449 (WVAT…GFAI).

This sequence belongs to the ABC transporter superfamily. ABCG family. PDR (TC 3.A.1.205) subfamily.

The protein resides in the membrane. Its function is as follows. May be a general defense protein. This Oryza sativa subsp. indica (Rice) protein is ABC transporter G family member 36.